The chain runs to 477 residues: Ribulose bisphosphate carboxylase large chain (477 aa).

A propeptide spanning residues 1-2 is cleaved from the precursor; that stretch reads MS. Proline 3 bears the N-acetylproline mark. Lysine 14 bears the N6,N6,N6-trimethyllysine mark. Positions 123 and 173 each coordinate substrate. The Proton acceptor role is filled by lysine 175. Residue lysine 177 participates in substrate binding. Lysine 201, aspartate 203, and glutamate 204 together coordinate Mg(2+). Lysine 201 is modified (N6-carboxylysine). Residue histidine 294 is the Proton acceptor of the active site. Arginine 295, histidine 327, and serine 379 together coordinate substrate.

Belongs to the RuBisCO large chain family. Type I subfamily. As to quaternary structure, heterohexadecamer of 8 large chains and 8 small chains; disulfide-linked. The disulfide link is formed within the large subunit homodimers. Mg(2+) serves as cofactor. The disulfide bond which can form in the large chain dimeric partners within the hexadecamer appears to be associated with oxidative stress and protein turnover.

The protein localises to the plastid. The protein resides in the chloroplast. The enzyme catalyses 2 (2R)-3-phosphoglycerate + 2 H(+) = D-ribulose 1,5-bisphosphate + CO2 + H2O. The catalysed reaction is D-ribulose 1,5-bisphosphate + O2 = 2-phosphoglycolate + (2R)-3-phosphoglycerate + 2 H(+). Its function is as follows. RuBisCO catalyzes two reactions: the carboxylation of D-ribulose 1,5-bisphosphate, the primary event in carbon dioxide fixation, as well as the oxidative fragmentation of the pentose substrate in the photorespiration process. Both reactions occur simultaneously and in competition at the same active site. The protein is Ribulose bisphosphate carboxylase large chain of Carthamus tinctorius (Safflower).